The chain runs to 377 residues: Alanine racemase (377 aa).

Lys37 (proton acceptor; specific for D-alanine) is an active-site residue. Lys37 bears the N6-(pyridoxal phosphate)lysine mark. Arg135 is a binding site for substrate. The active-site Proton acceptor; specific for L-alanine is the Tyr271. Residue Met319 participates in substrate binding.

Belongs to the alanine racemase family. Requires pyridoxal 5'-phosphate as cofactor.

The enzyme catalyses L-alanine = D-alanine. It functions in the pathway amino-acid biosynthesis; D-alanine biosynthesis; D-alanine from L-alanine: step 1/1. Catalyzes the interconversion of L-alanine and D-alanine. May also act on other amino acids. The protein is Alanine racemase (alr) of Helicobacter pylori (strain Shi470).